A 408-amino-acid chain; its full sequence is Glutamate N-acetyltransferase (408 aa).

Substrate is bound by residues Thr-150, Lys-176, Thr-189, Glu-271, Asn-403, and Thr-408. Thr-189 (nucleophile) is an active-site residue.

It belongs to the ArgJ family. As to quaternary structure, heterotetramer of two alpha and two beta chains.

It is found in the cytoplasm. It carries out the reaction N(2)-acetyl-L-ornithine + L-glutamate = N-acetyl-L-glutamate + L-ornithine. It functions in the pathway amino-acid biosynthesis; L-arginine biosynthesis; L-ornithine and N-acetyl-L-glutamate from L-glutamate and N(2)-acetyl-L-ornithine (cyclic): step 1/1. Catalyzes the transfer of the acetyl group from N(2)-acetylornithine to glutamate, forming N-acetylglutamate and L-ornithine. This Methanococcus maripaludis (strain DSM 14266 / JCM 13030 / NBRC 101832 / S2 / LL) protein is Glutamate N-acetyltransferase.